The sequence spans 768 residues: Phosphoribosylformylglycinamidine synthase subunit PurL (768 aa).

His44 is an active-site residue. Tyr47 and Lys86 together coordinate ATP. A Mg(2+)-binding site is contributed by Glu88. Substrate-binding positions include 89–92 (SHNH) and Arg111. Catalysis depends on His90, which acts as the Proton acceptor. A Mg(2+)-binding site is contributed by Asp112. Gln235 provides a ligand contact to substrate. Asp263 serves as a coordination point for Mg(2+). Position 307–309 (307–309 (ESQ)) interacts with substrate. Asp518 and Gly555 together coordinate ATP. Asn556 provides a ligand contact to Mg(2+). Ser558 contributes to the substrate binding site.

It belongs to the FGAMS family. As to quaternary structure, monomer. Part of the FGAM synthase complex composed of 1 PurL, 1 PurQ and 2 PurS subunits.

It localises to the cytoplasm. It carries out the reaction N(2)-formyl-N(1)-(5-phospho-beta-D-ribosyl)glycinamide + L-glutamine + ATP + H2O = 2-formamido-N(1)-(5-O-phospho-beta-D-ribosyl)acetamidine + L-glutamate + ADP + phosphate + H(+). It participates in purine metabolism; IMP biosynthesis via de novo pathway; 5-amino-1-(5-phospho-D-ribosyl)imidazole from N(2)-formyl-N(1)-(5-phospho-D-ribosyl)glycinamide: step 1/2. In terms of biological role, part of the phosphoribosylformylglycinamidine synthase complex involved in the purines biosynthetic pathway. Catalyzes the ATP-dependent conversion of formylglycinamide ribonucleotide (FGAR) and glutamine to yield formylglycinamidine ribonucleotide (FGAM) and glutamate. The FGAM synthase complex is composed of three subunits. PurQ produces an ammonia molecule by converting glutamine to glutamate. PurL transfers the ammonia molecule to FGAR to form FGAM in an ATP-dependent manner. PurS interacts with PurQ and PurL and is thought to assist in the transfer of the ammonia molecule from PurQ to PurL. The polypeptide is Phosphoribosylformylglycinamidine synthase subunit PurL (Synechococcus sp. (strain JA-2-3B'a(2-13)) (Cyanobacteria bacterium Yellowstone B-Prime)).